The sequence spans 209 residues: Large ribosomal subunit protein uL3 (209 aa).

A disordered region spans residues 133 to 153; it reads THGNSLSHRAPGSIGQNQTPG. Residue Gln-150 is modified to N5-methylglutamine.

It belongs to the universal ribosomal protein uL3 family. In terms of assembly, part of the 50S ribosomal subunit. Forms a cluster with proteins L14 and L19. Methylated by PrmB.

Its function is as follows. One of the primary rRNA binding proteins, it binds directly near the 3'-end of the 23S rRNA, where it nucleates assembly of the 50S subunit. This is Large ribosomal subunit protein uL3 from Pectobacterium atrosepticum (strain SCRI 1043 / ATCC BAA-672) (Erwinia carotovora subsp. atroseptica).